Consider the following 251-residue polypeptide: UstYa family oxidase phomYb (251 aa).

The tract at residues 1–47 (MDGYSSKKPRSASPSRSSLTEVEEEERDTLLKTVSLEEEDKSGENGP) is disordered. Residues 58–78 (AIGILMLSNIAFIAAFLTVFV) traverse the membrane as a helical segment. Asn135 is a glycosylation site (N-linked (GlcNAc...) asparagine). Short sequence motifs (HXXHC) lie at residues 160–164 (HQLHC) and 187–191 (HVSHC).

It belongs to the ustYa family.

It localises to the membrane. It functions in the pathway mycotoxin biosynthesis. In terms of biological role, ustYa family oxidase; part of the gene cluster that mediates the biosynthesis of the phomopsins, a group of hexapeptide mycotoxins which infects lupins and causes lupinosis disease in livestock. Within the pathway, phomYb is probably involved in the construction of the macrocyclic structure of the phomopsins. The pathway starts with the processing of the precursor phomA by several endopeptidases including kexin proteases as well as the cluster-specific S41 family peptidase phomP1 and the oligopeptidase phomG to produce 10 identical copies of the hexapeptide Tyr-Val-Ile-Pro-Ile-Asp. After being excised from the precursor peptide, the core peptides are cyclized and modified post-translationally by enzymes encoded within the gene cluster. The timing and order of proteolysis of the phomA precursor and PTMs are still unknown. Two tyrosinase-like enzymes, phomQ1 and phomQ2, catalyze the chlorination and hydroxylation of Tyr, respectively. PhomYb, is proposed to be involved in the construction of the macrocyclic structure. The other 4 ustYa family proteins may be involved in PTMs that generate the unique structure of phomopsin A. PhomYa is required for the hydroxylation of C-beta of Tyr. PhomYc, phomYd, and phomYe are responsible for the biosynthesis of 2,3-dehydroisoleucine (dIle), 2,3-dehydroaspartic acid (dAsp), and 3,4-dehydroproline (dPro), respectively. While dIle formation by phomYc is indispensable for the installation of dAsp by phomYd, the order of the other PTMs have not been elucidated yet. Most of the biosynthetic enzymes likely have broad substrate specificity, and thus, there might be a metabolic grid from a precursor to phomopsin A. The enzyme(s) responsible for the biosynthesis of 3,4-dehydrovaline (dVal) have also not been identified yet. Finally, phomM acts as an S-adenosylmethionine-dependent alpha-N-methyltransferase that catalyzes two successive N-methylation reactions, converting N-desmethyl-phomopsin A to phomopsin A and phomopsin A further to an N,N-dimethylated congener called phomopsin E. The polypeptide is UstYa family oxidase phomYb (Diaporthe leptostromiformis (Lupinosis disease fungus)).